The primary structure comprises 147 residues: Hemoglobin subunit beta (147 aa).

Residue V2 is modified to N-acetylvaline. The 145-residue stretch at 3-147 (HLTGDEKAAV…VANALAHKYH (145 aa)) folds into the Globin domain. T13 bears the Phosphothreonine mark. At S45 the chain carries Phosphoserine. N6-acetyllysine is present on K60. Position 64 (H64) interacts with heme b. K83 carries the post-translational modification N6-acetyllysine. Heme b is bound at residue H93. C94 is modified (S-nitrosocysteine). N6-acetyllysine is present on K145.

The protein belongs to the globin family. As to quaternary structure, heterotetramer of two alpha chains and two beta chains. Red blood cells.

Its function is as follows. Involved in oxygen transport from the lung to the various peripheral tissues. In Alouatta belzebul (Red-handed howler monkey), this protein is Hemoglobin subunit beta (HBB).